We begin with the raw amino-acid sequence, 225 residues long: THAP domain-containing protein 1 B (225 aa).

Residues 5–57 (CSAYGCKNRYDKDRPISFHKFPLKRPLLCKKWEAAVRRADFKPTKYSSICSDH) form a THAP-type zinc finger. The stretch at 139–194 (VEDTVHQRRRIQQLEEQVDKLRKKLKIANQKCRRQERSLEKLEKEVSEYREAKGSG) forms a coiled coil.

It belongs to the THAP1 family.

The protein resides in the nucleus. The protein localises to the nucleoplasm. Its function is as follows. DNA-binding transcription regulator that regulates endothelial cell proliferation and G1/S cell-cycle progression. Specifically binds the 5'-[AT]NTNN[GT]GGCA[AGT]-3' core DNA sequence and acts by modulating expression of pRB-E2F cell-cycle target genes. This Xenopus laevis (African clawed frog) protein is THAP domain-containing protein 1 B (thap1-b).